A 4467-amino-acid polypeptide reads, in one-letter code: Protocadherin-like protein (4467 aa).

The N-terminal stretch at 1–22 (MRGINAIVGFLLCFCLLHRINT) is a signal peptide. Cadherin domains follow at residues 23–128 (AVQF…SPTF), 129–238 (PQHL…SPVF), 239–350 (EKKS…VPVF), 351–455 (QEES…TPVF), 459–566 (NPQQ…NPDF), 567–664 (SKVV…PPTF), 665–764 (KNAP…PPTF), 765–884 (SRSS…SPEF), 885–994 (SQTS…PPLF), 1092–1197 (EAQP…QPRF), 1290–1395 (SRTV…SPKF), 1396–1499 (SADS…PPKF), 1495–1597 (GPPK…EPQF), 1601–1701 (SNGF…QPVR), 1793–1891 (TMID…KPQF), 1892–1992 (SESA…YPKF), 1993–2100 (EPNL…KPQF), 2101–2202 (LESD…RPVF), 2203–2312 (TDCP…FPFF), 2313–2423 (LTRT…PPAF), 2425–2529 (PSAV…TPTF), 2530–2639 (KLEE…PPIF), 2640–2746 (PKPS…IPKF), 2747–2849 (DNLI…SPYF), 2850–2954 (PNPP…APVF), 2955–3062 (NPRE…PPVF), 3063–3170 (VPAE…GPWF), and 3173–3288 (RYYE…EPFD). Residues 23-4258 (AVQFKQEILE…RPSSRWANPA (4236 aa)) lie on the Extracellular side of the membrane. Positions 3551–3589 (PDINCTTGTPCLHGGTCHNAVPKGIICECGRDYLGPECQ) constitute an EGF-like 1 domain. 7 disulfides stabilise this stretch: Cys3555-Cys3567, Cys3561-Cys3577, Cys3579-Cys3588, Cys3762-Cys3788, Cys3794-Cys3803, Cys3797-Cys3812, and Cys3814-Cys3823. The Laminin G-like 1 domain maps to 3590–3788 (STTRTFRGNS…LKEVNTELGC (199 aa)). Positions 3790 to 3824 (LNNQCPNCNGRGYCEPFWNYAICVCDLGFGGANCD) constitute an EGF-like 2 domain. Residues 3842–4096 (VKQVKRKRRE…KVIISSSGGS (255 aa)) form the Laminin G-like 2 domain. The disordered stretch occupies residues 4089 to 4118 (IISSSGGSVSGGSGGASGGSGGASGSGGSV). Over residues 4096–4118 (SVSGGSGGASGGSGGASGSGGSV) the composition is skewed to gly residues. Residues 4206–4238 (PCGSNFCRHGGTCVSADPPYCLCPVGWSGPVCE) form the EGF-like 3 domain. 3 disulfide bridges follow: Cys4207-Cys4218, Cys4212-Cys4226, and Cys4228-Cys4237. The chain crosses the membrane as a helical span at residues 4259-4279 (VIACILVILLAILVIIGAVLL). Over 4280-4467 (KRRPQPAVVA…NLNRIFNEDE (188 aa)) the chain is Cytoplasmic. Residues 4424-4445 (DVDDLSELGDSDEEPDEEEEQE) are disordered.

Component of the acid-insoluble organic matrix of the aragonitic skeleton (at protein level).

Its subcellular location is the membrane. This chain is Protocadherin-like protein, found in Acropora millepora (Staghorn coral).